The following is a 202-amino-acid chain: uncharacterized protein (202 aa).

The protein localises to the mitochondrion. This is an uncharacterized protein from Schizosaccharomyces pombe (strain 972 / ATCC 24843) (Fission yeast).